The chain runs to 476 residues: Bifunctional protein HldE (476 aa).

Residues 1–319 (MAQYSAQFPH…NAIHGRTVSG (319 aa)) form a ribokinase region. 195 to 198 (NMSE) serves as a coordination point for ATP. Asp-264 is a catalytic residue. The tract at residues 344-476 (MTNGCFDILH…VIKKIRDLKD (133 aa)) is cytidylyltransferase.

It in the N-terminal section; belongs to the carbohydrate kinase PfkB family. This sequence in the C-terminal section; belongs to the cytidylyltransferase family. As to quaternary structure, homodimer.

It carries out the reaction D-glycero-beta-D-manno-heptose 7-phosphate + ATP = D-glycero-beta-D-manno-heptose 1,7-bisphosphate + ADP + H(+). It catalyses the reaction D-glycero-beta-D-manno-heptose 1-phosphate + ATP + H(+) = ADP-D-glycero-beta-D-manno-heptose + diphosphate. Its pathway is nucleotide-sugar biosynthesis; ADP-L-glycero-beta-D-manno-heptose biosynthesis; ADP-L-glycero-beta-D-manno-heptose from D-glycero-beta-D-manno-heptose 7-phosphate: step 1/4. The protein operates within nucleotide-sugar biosynthesis; ADP-L-glycero-beta-D-manno-heptose biosynthesis; ADP-L-glycero-beta-D-manno-heptose from D-glycero-beta-D-manno-heptose 7-phosphate: step 3/4. In terms of biological role, catalyzes the phosphorylation of D-glycero-D-manno-heptose 7-phosphate at the C-1 position to selectively form D-glycero-beta-D-manno-heptose-1,7-bisphosphate. Its function is as follows. Catalyzes the ADP transfer from ATP to D-glycero-beta-D-manno-heptose 1-phosphate, yielding ADP-D-glycero-beta-D-manno-heptose. This chain is Bifunctional protein HldE, found in Actinobacillus succinogenes (strain ATCC 55618 / DSM 22257 / CCUG 43843 / 130Z).